Consider the following 542-residue polypeptide: Nif-specific regulatory protein (542 aa).

A GAF domain is found at 29–170 (DLSKTLREVL…MVANLIGQTV (142 aa)). Positions 203 to 432 (VIGISKAMQE…LENCVERTAT (230 aa)) constitute a Sigma-54 factor interaction domain. ATP contacts are provided by residues 231 to 238 (GESGTGKE) and 294 to 303 (AHGGTLFLDE). The tract at residues 433 to 499 (MMRGDLITEV…ATGAAPPTSE (67 aa)) is inter-domain linker. A divalent metal cation-binding residues include Cys-446 and Cys-451. The tract at residues 500-542 (RERLIWAMEQCGWVQAKAARALNISPRQMGYALQKFNIEVKKF) is C-terminal DNA-binding domain. The segment at residues 514-533 (QAKAARALNISPRQMGYALQ) is a DNA-binding region (H-T-H motif).

Interacts with sigma-54.

In terms of biological role, required for activation of most nif operons, which are directly involved in nitrogen fixation. The polypeptide is Nif-specific regulatory protein (nifA) (Herbaspirillum seropedicae).